The following is a 938-amino-acid chain: Bifunctional uridylyltransferase/uridylyl-removing enzyme (938 aa).

The tract at residues 1–379 is uridylyltransferase; that stretch reads MPPRLRPTHL…PGRAQKRKPL (379 aa). The uridylyl-removing stretch occupies residues 380 to 733; it reads DEPGFHEVGG…GRIRSELNAA (354 aa). Positions 495-617 constitute an HD domain; the sequence is VDEHTLRAVG…VQSPERLRLL (123 aa). ACT domains are found at residues 734 to 813 and 845 to 924; these read EVVV…PVAR and VVEA…TAQA.

It belongs to the GlnD family. It depends on Mg(2+) as a cofactor.

It catalyses the reaction [protein-PII]-L-tyrosine + UTP = [protein-PII]-uridylyl-L-tyrosine + diphosphate. It carries out the reaction [protein-PII]-uridylyl-L-tyrosine + H2O = [protein-PII]-L-tyrosine + UMP + H(+). Uridylyltransferase (UTase) activity is inhibited by glutamine, while glutamine activates uridylyl-removing (UR) activity. Functionally, modifies, by uridylylation and deuridylylation, the PII regulatory proteins (GlnB and homologs), in response to the nitrogen status of the cell that GlnD senses through the glutamine level. Under low glutamine levels, catalyzes the conversion of the PII proteins and UTP to PII-UMP and PPi, while under higher glutamine levels, GlnD hydrolyzes PII-UMP to PII and UMP (deuridylylation). Thus, controls uridylylation state and activity of the PII proteins, and plays an important role in the regulation of nitrogen assimilation and metabolism. The sequence is that of Bifunctional uridylyltransferase/uridylyl-removing enzyme from Phenylobacterium zucineum (strain HLK1).